An 889-amino-acid chain; its full sequence is Coatomer subunit beta' (889 aa).

WD repeat units follow at residues 11 to 41, 53 to 83, 95 to 125, 138 to 169, 182 to 214, and 226 to 256; these read NRSD…ELWN, VTET…RVFN, AHPD…KLWN, GHEH…KVWS, GQER…KIWD, and GHMS…KIWN. S326 carries the phosphoserine modification. Residues 806 to 889 form a disordered region; the sequence is CGAEGLPGSS…AVPEPVEEES (84 aa). A compositionally biased stretch (basic and acidic residues) spans 836–864; sequence DENKEAEVEDSEFKESNSEAVEAEKKEEE. Low complexity predominate over residues 866 to 879; sequence PQQQQSEQQPEQGE.

It belongs to the WD repeat COPB2 family. Oligomeric complex that consists of at least the alpha, beta, beta', gamma, delta, epsilon and zeta subunits. Interacts with the ESCRT-0 subunit VPS27.

The protein resides in the cytoplasm. Its subcellular location is the golgi apparatus membrane. It localises to the cytoplasmic vesicle. The protein localises to the COPI-coated vesicle membrane. The coatomer is a cytosolic protein complex that binds to dilysine motifs and reversibly associates with Golgi non-clathrin-coated vesicles, which further mediate biosynthetic protein transport from the ER, via the Golgi up to the trans Golgi network. Coatomer complex is required for budding from Golgi membranes, and is essential for the retrograde Golgi-to-ER transport of dilysine-tagged proteins. In Saccharomyces cerevisiae (strain ATCC 204508 / S288c) (Baker's yeast), this protein is Coatomer subunit beta' (SEC27).